Consider the following 88-residue polypeptide: Small ribosomal subunit protein bS20 (88 aa).

The segment covering 1 to 12 (MANHKSALKRAK) has biased composition (basic residues). Residues 1–23 (MANHKSALKRAKQNTIKQMRNRS) form a disordered region.

Belongs to the bacterial ribosomal protein bS20 family.

Its function is as follows. Binds directly to 16S ribosomal RNA. The protein is Small ribosomal subunit protein bS20 of Desulfatibacillum aliphaticivorans.